Consider the following 161-residue polypeptide: 3-isopropylmalate dehydratase small subunit (161 aa).

It belongs to the LeuD family. LeuD type 2 subfamily. As to quaternary structure, heterodimer of LeuC and LeuD.

It catalyses the reaction (2R,3S)-3-isopropylmalate = (2S)-2-isopropylmalate. It functions in the pathway amino-acid biosynthesis; L-leucine biosynthesis; L-leucine from 3-methyl-2-oxobutanoate: step 2/4. Functionally, catalyzes the isomerization between 2-isopropylmalate and 3-isopropylmalate, via the formation of 2-isopropylmaleate. This chain is 3-isopropylmalate dehydratase small subunit, found in Pyrobaculum calidifontis (strain DSM 21063 / JCM 11548 / VA1).